The sequence spans 747 residues: Major facilitator superfamily domain-containing protein 6-B (747 aa).

A run of 11 helical transmembrane segments spans residues L15–Q35, K75–V95, T222–V242, W271–I291, I306–H326, V391–W411, T420–I440, V453–Y470, G485–L507, L520–A540, and G546–G566. 2 stretches are compositionally biased toward polar residues: residues N597–D606 and N652–A668. Disordered stretches follow at residues N597 to A625 and N652 to H747. Over residues S675 to S685 the composition is skewed to low complexity.

Belongs to the major facilitator superfamily. MFSD6 family.

The protein resides in the membrane. The sequence is that of Major facilitator superfamily domain-containing protein 6-B (mfsd6b) from Danio rerio (Zebrafish).